A 263-amino-acid chain; its full sequence is uncharacterized protein (263 aa).

Residues 198-224 (KRSSDSFVSLKPGEDEHSPLEISTCGN) are disordered.

This is an uncharacterized protein from Saccharomyces cerevisiae (strain ATCC 204508 / S288c) (Baker's yeast).